A 431-amino-acid chain; its full sequence is Histidinol dehydrogenase (431 aa).

Residues tyrosine 130, glutamine 192, and asparagine 215 each coordinate NAD(+). Residues serine 238, glutamine 260, and histidine 263 each coordinate substrate. Glutamine 260 and histidine 263 together coordinate Zn(2+). Catalysis depends on proton acceptor residues glutamate 328 and histidine 329. Substrate-binding residues include histidine 329, aspartate 362, glutamate 416, and histidine 421. Aspartate 362 provides a ligand contact to Zn(2+). Residue histidine 421 coordinates Zn(2+).

This sequence belongs to the histidinol dehydrogenase family. Requires Zn(2+) as cofactor.

The catalysed reaction is L-histidinol + 2 NAD(+) + H2O = L-histidine + 2 NADH + 3 H(+). Its pathway is amino-acid biosynthesis; L-histidine biosynthesis; L-histidine from 5-phospho-alpha-D-ribose 1-diphosphate: step 9/9. Catalyzes the sequential NAD-dependent oxidations of L-histidinol to L-histidinaldehyde and then to L-histidine. The chain is Histidinol dehydrogenase from Thermosynechococcus vestitus (strain NIES-2133 / IAM M-273 / BP-1).